Here is a 282-residue protein sequence, read N- to C-terminus: Probable endonuclease 4 (282 aa).

Residues histidine 69, histidine 109, glutamate 145, aspartate 179, histidine 182, histidine 216, aspartate 229, histidine 231, and glutamate 261 each coordinate Zn(2+).

The protein belongs to the AP endonuclease 2 family. Requires Zn(2+) as cofactor.

It carries out the reaction Endonucleolytic cleavage to 5'-phosphooligonucleotide end-products.. Endonuclease IV plays a role in DNA repair. It cleaves phosphodiester bonds at apurinic or apyrimidinic (AP) sites, generating a 3'-hydroxyl group and a 5'-terminal sugar phosphate. The polypeptide is Probable endonuclease 4 (Magnetococcus marinus (strain ATCC BAA-1437 / JCM 17883 / MC-1)).